The sequence spans 320 residues: Na(+)-translocating NADH-quinone reductase subunit C (320 aa).

The helical transmembrane segment at Trp-16–Ile-36 threads the bilayer. Thr-285 carries the post-translational modification FMN phosphoryl threonine.

Belongs to the NqrC family. In terms of assembly, composed of six subunits; NqrA, NqrB, NqrC, NqrD, NqrE and NqrF. Requires FMN as cofactor.

Its subcellular location is the cell inner membrane. It carries out the reaction a ubiquinone + n Na(+)(in) + NADH + H(+) = a ubiquinol + n Na(+)(out) + NAD(+). Functionally, NQR complex catalyzes the reduction of ubiquinone-1 to ubiquinol by two successive reactions, coupled with the transport of Na(+) ions from the cytoplasm to the periplasm. NqrA to NqrE are probably involved in the second step, the conversion of ubisemiquinone to ubiquinol. The chain is Na(+)-translocating NADH-quinone reductase subunit C from Chlamydia pneumoniae (Chlamydophila pneumoniae).